Reading from the N-terminus, the 452-residue chain is Phosphoglucosamine mutase (452 aa).

The active-site Phosphoserine intermediate is S108. Mg(2+) is bound by residues S108, D247, D249, and D251. The residue at position 108 (S108) is a Phosphoserine.

Belongs to the phosphohexose mutase family. Mg(2+) serves as cofactor. In terms of processing, activated by phosphorylation.

It catalyses the reaction alpha-D-glucosamine 1-phosphate = D-glucosamine 6-phosphate. In terms of biological role, catalyzes the conversion of glucosamine-6-phosphate to glucosamine-1-phosphate. The chain is Phosphoglucosamine mutase from Paraburkholderia xenovorans (strain LB400).